A 484-amino-acid polypeptide reads, in one-letter code: Glutamyl-tRNA(Gln) amidotransferase subunit A (484 aa).

Residues Lys-77 and Ser-152 each act as charge relay system in the active site. Residue Ser-176 is the Acyl-ester intermediate of the active site.

It belongs to the amidase family. GatA subfamily. In terms of assembly, heterotrimer of A, B and C subunits.

The enzyme catalyses L-glutamyl-tRNA(Gln) + L-glutamine + ATP + H2O = L-glutaminyl-tRNA(Gln) + L-glutamate + ADP + phosphate + H(+). Its function is as follows. Allows the formation of correctly charged Gln-tRNA(Gln) through the transamidation of misacylated Glu-tRNA(Gln) in organisms which lack glutaminyl-tRNA synthetase. The reaction takes place in the presence of glutamine and ATP through an activated gamma-phospho-Glu-tRNA(Gln). The protein is Glutamyl-tRNA(Gln) amidotransferase subunit A of Pseudomonas aeruginosa (strain LESB58).